Consider the following 152-residue polypeptide: Small ribosomal subunit protein uS19u (152 aa).

This sequence belongs to the universal ribosomal protein uS19 family.

It is found in the cytoplasm. The protein is Small ribosomal subunit protein uS19u (RPS15A) of Arabidopsis thaliana (Mouse-ear cress).